The primary structure comprises 523 residues: Acetyl-CoA hydrolase (523 aa).

277–281 (GIGNI) lines the CoA pocket. Glu-302 acts as the 5-glutamyl coenzyme A thioester intermediate in catalysis. CoA contacts are provided by Asn-392 and Gly-396.

Belongs to the acetyl-CoA hydrolase/transferase family.

It is found in the cytoplasm. The enzyme catalyses acetyl-CoA + H2O = acetate + CoA + H(+). In terms of biological role, presumably involved in regulating the intracellular acetyl-CoA pool for fatty acid and cholesterol synthesis and fatty acid oxidation. The sequence is that of Acetyl-CoA hydrolase (ACH1) from Eremothecium gossypii (strain ATCC 10895 / CBS 109.51 / FGSC 9923 / NRRL Y-1056) (Yeast).